The primary structure comprises 105 residues: Plastocyanin (105 aa).

A Plastocyanin-like domain is found at glutamate 1–glycine 105. Residues histidine 39, cysteine 89, histidine 92, and methionine 97 each contribute to the Cu(2+) site.

It belongs to the plastocyanin family. Requires Cu(2+) as cofactor.

It is found in the cellular thylakoid membrane. Its function is as follows. Participates in electron transfer between P700 and the cytochrome b6-f complex in photosystem I. This chain is Plastocyanin (petE), found in Anabaena variabilis.